Here is a 237-residue protein sequence, read N- to C-terminus: Phosphoribosylaminoimidazole-succinocarboxamide synthase (237 aa).

This sequence belongs to the SAICAR synthetase family.

It carries out the reaction 5-amino-1-(5-phospho-D-ribosyl)imidazole-4-carboxylate + L-aspartate + ATP = (2S)-2-[5-amino-1-(5-phospho-beta-D-ribosyl)imidazole-4-carboxamido]succinate + ADP + phosphate + 2 H(+). It functions in the pathway purine metabolism; IMP biosynthesis via de novo pathway; 5-amino-1-(5-phospho-D-ribosyl)imidazole-4-carboxamide from 5-amino-1-(5-phospho-D-ribosyl)imidazole-4-carboxylate: step 1/2. The polypeptide is Phosphoribosylaminoimidazole-succinocarboxamide synthase (Listeria monocytogenes serovar 1/2a (strain ATCC BAA-679 / EGD-e)).